A 315-amino-acid chain; its full sequence is Methionyl-tRNA formyltransferase (315 aa).

Residue 107–110 (SLLP) participates in (6S)-5,6,7,8-tetrahydrofolate binding.

Belongs to the Fmt family.

The enzyme catalyses L-methionyl-tRNA(fMet) + (6R)-10-formyltetrahydrofolate = N-formyl-L-methionyl-tRNA(fMet) + (6S)-5,6,7,8-tetrahydrofolate + H(+). Functionally, attaches a formyl group to the free amino group of methionyl-tRNA(fMet). The formyl group appears to play a dual role in the initiator identity of N-formylmethionyl-tRNA by promoting its recognition by IF2 and preventing the misappropriation of this tRNA by the elongation apparatus. This Borreliella afzelii (strain PKo) (Borrelia afzelii) protein is Methionyl-tRNA formyltransferase.